The primary structure comprises 390 residues: Succinyl-diaminopimelate desuccinylase (390 aa).

Position 75 (His-75) interacts with Zn(2+). The active site involves Asp-77. Asp-108 is a binding site for Zn(2+). The active-site Proton acceptor is the Glu-141. The Zn(2+) site is built by Glu-142, Glu-170, and His-359.

The protein belongs to the peptidase M20A family. DapE subfamily. In terms of assembly, homodimer. Zn(2+) is required as a cofactor. The cofactor is Co(2+).

The enzyme catalyses N-succinyl-(2S,6S)-2,6-diaminopimelate + H2O = (2S,6S)-2,6-diaminopimelate + succinate. It functions in the pathway amino-acid biosynthesis; L-lysine biosynthesis via DAP pathway; LL-2,6-diaminopimelate from (S)-tetrahydrodipicolinate (succinylase route): step 3/3. In terms of biological role, catalyzes the hydrolysis of N-succinyl-L,L-diaminopimelic acid (SDAP), forming succinate and LL-2,6-diaminopimelate (DAP), an intermediate involved in the bacterial biosynthesis of lysine and meso-diaminopimelic acid, an essential component of bacterial cell walls. The chain is Succinyl-diaminopimelate desuccinylase from Maricaulis maris (strain MCS10) (Caulobacter maris).